The following is a 344-amino-acid chain: N-acetyl-gamma-glutamyl-phosphate reductase (344 aa).

Cys-150 is an active-site residue.

This sequence belongs to the NAGSA dehydrogenase family. Type 1 subfamily.

It is found in the cytoplasm. The catalysed reaction is N-acetyl-L-glutamate 5-semialdehyde + phosphate + NADP(+) = N-acetyl-L-glutamyl 5-phosphate + NADPH + H(+). The protein operates within amino-acid biosynthesis; L-arginine biosynthesis; N(2)-acetyl-L-ornithine from L-glutamate: step 3/4. In terms of biological role, catalyzes the NADPH-dependent reduction of N-acetyl-5-glutamyl phosphate to yield N-acetyl-L-glutamate 5-semialdehyde. The protein is N-acetyl-gamma-glutamyl-phosphate reductase of Pseudomonas savastanoi pv. phaseolicola (strain 1448A / Race 6) (Pseudomonas syringae pv. phaseolicola (strain 1448A / Race 6)).